The following is a 481-amino-acid chain: Betaine aldehyde dehydrogenase 2 (481 aa).

K(+) contacts are provided by Ser-29 and Asp-96. NAD(+) is bound at residue 152–154 (GAW). Catalysis depends on Lys-164, which acts as the Charge relay system. 178–181 (KPSE) is a binding site for NAD(+). A K(+)-binding site is contributed by Val-182. 231–234 (SVKT) serves as a coordination point for NAD(+). Ile-246 is a K(+) binding site. The active-site Proton acceptor is the Glu-252. 3 residues coordinate NAD(+): Gly-254, Cys-286, and Glu-383. Cys-286 serves as the catalytic Nucleophile. Residue Cys-286 is modified to Cysteine sulfenic acid (-SOH). Positions 453 and 456 each coordinate K(+). Residue Glu-460 is the Charge relay system of the active site.

This sequence belongs to the aldehyde dehydrogenase family. As to quaternary structure, dimer of dimers. The cofactor is K(+).

The enzyme catalyses betaine aldehyde + NAD(+) + H2O = glycine betaine + NADH + 2 H(+). The protein operates within amine and polyamine biosynthesis; betaine biosynthesis via choline pathway; betaine from betaine aldehyde: step 1/1. Functionally, involved in the biosynthesis of the osmoprotectant glycine betaine. Catalyzes the irreversible oxidation of betaine aldehyde to the corresponding acid. The chain is Betaine aldehyde dehydrogenase 2 from Rhizobium meliloti (strain 1021) (Ensifer meliloti).